Consider the following 78-residue polypeptide: Mandibular organ-inhibiting hormone 1 (78 aa).

Disulfide bonds link C7–C44, C24–C40, and C27–C53.

It belongs to the arthropod CHH/MIH/GIH/VIH hormone family. In terms of tissue distribution, produced by the medulla terminalis X-organ in the eyestalks and transported to the sinus gland where it is stored and released.

The protein localises to the secreted. In terms of biological role, represses the synthesis of methyl farnesoate, the precursor of insect juvenile hormone III in the mandibular organ. In Cancer pagurus (Rock crab), this protein is Mandibular organ-inhibiting hormone 1.